A 274-amino-acid polypeptide reads, in one-letter code: THAP domain-containing protein 8 (274 aa).

A THAP-type zinc finger spans residues 1–85 (MPKYCRAPNC…LRPDAVPSIF (85 aa)). The disordered stretch occupies residues 83–121 (SIFSRGPPAKSQRRTRSTQKPVSPPPPLQKNTPLPQSPA).

The protein is THAP domain-containing protein 8 (THAP8) of Homo sapiens (Human).